Consider the following 36-residue polypeptide: Conotoxin Cl14.10 (36 aa).

Positions 1–2 (NE) are excised as a propeptide.

In terms of processing, contains 2 disulfide bond. In terms of tissue distribution, expressed by the venom duct.

It is found in the secreted. The sequence is that of Conotoxin Cl14.10 from Californiconus californicus (California cone).